Here is a 234-residue protein sequence, read N- to C-terminus: Ammonia monooxygenase gamma subunit (234 aa).

The N-terminal stretch at 1-20 (MRMIKFLLLAILLAPFVAHS) is a signal peptide. The Cytochrome c domain maps to 38 to 193 (ESLQRGAKGF…RFVADLVNYM (156 aa)). Heme c contacts are provided by Cys-51, Cys-54, and His-55. The helical transmembrane segment at 206-226 (ELGITVLLFLFGMLGLTYLLK) threads the bilayer.

Belongs to the cytochrome c family. As to quaternary structure, the soluble ammonia monooxygenase is a nonamer composed of three alpha subunits (AmoA), three beta subunits (AmoB) and three gamma subunits (Cytochrome c1 PetC). The cofactor is heme c.

It localises to the cell membrane. It is found in the cytoplasm. Its function is as follows. Part of the ammonia monooxygenase complex, which catalyzes the oxidation of ammonia to hydroxylamine, the first reaction in the process of ammonia oxidation to nitrite. This chain is Ammonia monooxygenase gamma subunit, found in Nitrosomonas europaea (strain ATCC 19718 / CIP 103999 / KCTC 2705 / NBRC 14298).